Consider the following 215-residue polypeptide: Probable transaldolase (215 aa).

The Schiff-base intermediate with substrate role is filled by Lys-83.

Belongs to the transaldolase family. Type 3B subfamily.

It localises to the cytoplasm. It catalyses the reaction D-sedoheptulose 7-phosphate + D-glyceraldehyde 3-phosphate = D-erythrose 4-phosphate + beta-D-fructose 6-phosphate. It functions in the pathway carbohydrate degradation; pentose phosphate pathway; D-glyceraldehyde 3-phosphate and beta-D-fructose 6-phosphate from D-ribose 5-phosphate and D-xylulose 5-phosphate (non-oxidative stage): step 2/3. Its function is as follows. Transaldolase is important for the balance of metabolites in the pentose-phosphate pathway. In Clostridium acetobutylicum (strain ATCC 824 / DSM 792 / JCM 1419 / IAM 19013 / LMG 5710 / NBRC 13948 / NRRL B-527 / VKM B-1787 / 2291 / W), this protein is Probable transaldolase (tal).